Here is a 45-residue protein sequence, read N- to C-terminus: Photosystem II reaction center protein K (45 aa).

Positions Met1 to Ala8 are excised as a propeptide. The helical transmembrane segment at Ile23 to Gly43 threads the bilayer.

Belongs to the PsbK family. PSII is composed of 1 copy each of membrane proteins PsbA, PsbB, PsbC, PsbD, PsbE, PsbF, PsbH, PsbI, PsbJ, PsbK, PsbL, PsbM, PsbT, PsbX, PsbY, PsbZ, Psb30/Ycf12, at least 3 peripheral proteins of the oxygen-evolving complex and a large number of cofactors. It forms dimeric complexes.

It localises to the plastid. Its subcellular location is the chloroplast thylakoid membrane. Functionally, one of the components of the core complex of photosystem II (PSII). PSII is a light-driven water:plastoquinone oxidoreductase that uses light energy to abstract electrons from H(2)O, generating O(2) and a proton gradient subsequently used for ATP formation. It consists of a core antenna complex that captures photons, and an electron transfer chain that converts photonic excitation into a charge separation. The sequence is that of Photosystem II reaction center protein K from Pyropia yezoensis (Susabi-nori).